The following is a 420-amino-acid chain: Protein disulfide isomerase Creld1 (420 aa).

The first 29 residues, 1-29 (MAPQPLRGLVPFLLWCLSLFLSLPGPVWL), serve as a signal peptide directing secretion. Topologically, residues 30–362 (QPSPPPHSAP…GFFAEMTEDE (333 aa)) are extracellular. The CXXC motif lies at 46–49 (CHTC). Cystine bridges form between Cys46-Cys49, Cys155-Cys169, Cys163-Cys181, and Cys183-Cys192. One can recognise an EGF-like 1 domain in the interval 153–193 (LPCPGGTERPCGGYGQCEGEGTRGGSGHCDCQAGYGGEACG). N-linked (GlcNAc...) asparagine glycosylation is present at Asn205. 2 FU repeats span residues 208-255 (HLVC…EQAT) and 268-315 (SYEC…VVCP). A CXXC motif is present at residues 278–281 (CLGC). 4 disulfides stabilise this stretch: Cys278-Cys281, Cys309-Cys321, Cys314-Cys330, and Cys332-Cys343. Positions 305-342 (DVDECETVVCPGENEQCENTEGSYRCVCAEGFRQEDGI) constitute an EGF-like 2; calcium-binding domain. The helical transmembrane segment at 363–383 (MVVLQQMFFGVIICALATLAA) threads the bilayer. Lys384 is a topological domain (cytoplasmic). A helical transmembrane segment spans residues 385–405 (GDLVFTAIFIGAVAAMTGYWL). Residues 406–420 (SERSDRVLEGFIKGR) are Extracellular-facing.

This sequence belongs to the CRELD family.

It localises to the membrane. The catalysed reaction is Catalyzes the rearrangement of -S-S- bonds in proteins.. In terms of biological role, protein disulfide isomerase. Promotes the localization of acetylcholine receptors (AChRs) to the plasma membrane. The protein is Protein disulfide isomerase Creld1 (Creld1) of Rattus norvegicus (Rat).